The chain runs to 388 residues: 1-deoxy-D-xylulose 5-phosphate reductoisomerase (388 aa).

NADPH-binding residues include threonine 15, glycine 16, serine 17, isoleucine 18, and asparagine 127. Residue lysine 128 participates in 1-deoxy-D-xylulose 5-phosphate binding. Residue glutamate 129 coordinates NADPH. Aspartate 153 serves as a coordination point for Mn(2+). Residues serine 154, glutamate 155, serine 179, and histidine 202 each coordinate 1-deoxy-D-xylulose 5-phosphate. Glutamate 155 provides a ligand contact to Mn(2+). Residue glycine 208 coordinates NADPH. The 1-deoxy-D-xylulose 5-phosphate site is built by serine 215, asparagine 220, lysine 221, and glutamate 224. Residue glutamate 224 participates in Mn(2+) binding.

Belongs to the DXR family. Mg(2+) is required as a cofactor. The cofactor is Mn(2+).

It catalyses the reaction 2-C-methyl-D-erythritol 4-phosphate + NADP(+) = 1-deoxy-D-xylulose 5-phosphate + NADPH + H(+). The protein operates within isoprenoid biosynthesis; isopentenyl diphosphate biosynthesis via DXP pathway; isopentenyl diphosphate from 1-deoxy-D-xylulose 5-phosphate: step 1/6. Its function is as follows. Catalyzes the NADPH-dependent rearrangement and reduction of 1-deoxy-D-xylulose-5-phosphate (DXP) to 2-C-methyl-D-erythritol 4-phosphate (MEP). This chain is 1-deoxy-D-xylulose 5-phosphate reductoisomerase, found in Bacteroides fragilis (strain ATCC 25285 / DSM 2151 / CCUG 4856 / JCM 11019 / LMG 10263 / NCTC 9343 / Onslow / VPI 2553 / EN-2).